The sequence spans 337 residues: MSTEVSEAQARRAVADIFNSTLASSAIGAAWELGALDELRENGKLDVSDFAVRHDLHEPAVVGMFTALASVGIVRREGATVVVGPYFDEANHHRSLFHWLNQGSGELFRRMPQVLPNENRTGKFYQRDAGAISYACREISERYFDPAFWAAVDGLGYTPTTVADLGSGSGERLIQIARRFPGVRGLGVDIADGAIAMAEKEVAAKGFGDQISFVRGDARTIDQVSARGEFAEVDLLTCFMMGHDFWPRENCVQTLRKLRAAFPNVRRFLLGDATRTVGIPDRELPVFTLGFEFGHDMMGVYLPTLDEWDGVFEEGGWRCVKKHAIDSLSVSVVFELE.

This sequence belongs to the methyltransferase superfamily.

The catalysed reaction is 3-phenylpyruvate + S-adenosyl-L-methionine = (3S)-2-oxo-3-phenylbutanoate + S-adenosyl-L-homocysteine + H(+). It functions in the pathway antibiotic biosynthesis. Functionally, S-adenosyl-L-methionine-dependent methyltransferase involved in synthesis of the nonproteinogenic amino acid (2S,3S)-beta-methyl-phenylalanine, a building block of the antibiotic mannopeptimycin. The chain is Phenylpyruvate C(3)-methyltransferase (mppJ) from Streptomyces hygroscopicus.